A 125-amino-acid chain; its full sequence is Small ribosomal subunit protein eS6 (125 aa).

It belongs to the eukaryotic ribosomal protein eS6 family. In terms of assembly, part of the 30S ribosomal subunit.

This chain is Small ribosomal subunit protein eS6, found in Thermococcus kodakarensis (strain ATCC BAA-918 / JCM 12380 / KOD1) (Pyrococcus kodakaraensis (strain KOD1)).